We begin with the raw amino-acid sequence, 24 residues long: Citropin-3.1.2 (24 aa).

As to expression, expressed by the dorsal and submental skin glands.

It is found in the secreted. The protein is Citropin-3.1.2 of Ranoidea citropa (Australian Blue Mountains tree frog).